Here is a 305-residue protein sequence, read N- to C-terminus: MIFQRTVKEMVKTTGVGLHSGNKVTLSIKPAPVNYGIVLVRTDLEPAVSIPAKADQVRETTMCTALVNDDGVRISTIEHLFAALAGLGIDNALIEVDAPEIPIMDGSASPWVFLLQSVGIQEQSAAKKYLRIKDTIRVEDGDKWAELKPFNGFRVDFAIDFNHPEIARSQQHMVMDFSTSAFVRDISRARTFGFMRDIEYLRANNLALGGSMENAVVLDEYKVLNPDGLRYEDEFVKHKILDAFGDLYVAGHAIVGEFCAFKTGHALNNQLVRALLAQQDAWELVSFEKDEAPVSFSVPAGAVFA.

Residues histidine 79, histidine 238, and aspartate 242 each contribute to the Zn(2+) site. Histidine 265 (proton donor) is an active-site residue.

It belongs to the LpxC family. The cofactor is Zn(2+).

The enzyme catalyses a UDP-3-O-[(3R)-3-hydroxyacyl]-N-acetyl-alpha-D-glucosamine + H2O = a UDP-3-O-[(3R)-3-hydroxyacyl]-alpha-D-glucosamine + acetate. Its pathway is glycolipid biosynthesis; lipid IV(A) biosynthesis; lipid IV(A) from (3R)-3-hydroxytetradecanoyl-[acyl-carrier-protein] and UDP-N-acetyl-alpha-D-glucosamine: step 2/6. Catalyzes the hydrolysis of UDP-3-O-myristoyl-N-acetylglucosamine to form UDP-3-O-myristoylglucosamine and acetate, the committed step in lipid A biosynthesis. This Shewanella woodyi (strain ATCC 51908 / MS32) protein is UDP-3-O-acyl-N-acetylglucosamine deacetylase.